The following is a 493-amino-acid chain: Signal recognition particle subunit SRP54 3 (493 aa).

A G-domain region spans residues 1–294 (MVLADVGGSI…NVEPFVARLL (294 aa)). Residues 107–114 (GLQGSGKT), 189–193 (DTSGR), and 247–250 (TKLD) each bind GTP. Residues 295 to 493 (GRGDLPGLID…KMLAGMRGGA (199 aa)) are M-domain.

It belongs to the GTP-binding SRP family. SRP54 subfamily. In terms of assembly, component of a signal recognition particle (SRP) complex that consists of a 7SL RNA molecule of 300 nucleotides and six protein subunits: SRP72, SRP68, SRP54, SRP19, SRP14 and SRP9.

It is found in the cytoplasm. The protein resides in the endoplasmic reticulum. The catalysed reaction is GTP + H2O = GDP + phosphate + H(+). Its function is as follows. Component of the signal recognition particle (SRP) complex, a ribonucleoprotein complex that mediates the cotranslational targeting of secretory and membrane proteins to the endoplasmic reticulum (ER). As part of the SRP complex, associates with the SRP receptor (SR) component SRPRA to target secretory proteins to the endoplasmic reticulum membrane. Binds to the signal sequence of presecretory proteins when they emerge from the ribosomes. Displays basal GTPase activity, and stimulates reciprocal GTPase activation of the SR subunit SRPRA. Forms a guanosine 5'-triphosphate (GTP)-dependent complex with the SR subunit SRPRA. SR compaction and GTPase mediated rearrangement of SR drive SRP-mediated cotranslational protein translocation into the ER. Requires the presence of SRP9/SRP14 and/or SRP19 to stably interact with RNA. This Hordeum vulgare (Barley) protein is Signal recognition particle subunit SRP54 3 (SRP54-3).